We begin with the raw amino-acid sequence, 148 residues long: Putative pre-16S rRNA nuclease (148 aa).

This sequence belongs to the YqgF nuclease family.

It is found in the cytoplasm. In terms of biological role, could be a nuclease involved in processing of the 5'-end of pre-16S rRNA. This Chromohalobacter salexigens (strain ATCC BAA-138 / DSM 3043 / CIP 106854 / NCIMB 13768 / 1H11) protein is Putative pre-16S rRNA nuclease.